A 322-amino-acid chain; its full sequence is Corticotropin-releasing factor-binding protein (322 aa).

Positions M1–R24 are cleaved as a signal peptide. Intrachain disulfides connect C60-C81, C104-C141, C183-C205, C237-C264, and C277-C318. The N-linked (GlcNAc...) asparagine glycan is linked to N204.

It belongs to the CRF-binding protein family.

The protein localises to the secreted. Functionally, binds CRF and inactivates it. May prevent inappropriate pituitary-adrenal stimulation in pregnancy. This chain is Corticotropin-releasing factor-binding protein (Crhbp), found in Rattus norvegicus (Rat).